Reading from the N-terminus, the 180-residue chain is MPLLNSVTTPYAEALLQVVSENDQTEEMVKEVKQLLSLINDSPDLEKTLSSPVLETDTKKKIIIEIFSEKINSSLLNFLKLLADRQRIGIVTSILDRFLEIYRENSNIALATVTSAVELTDDQKGLITKKIINIAGTEKLELVTKIDPSLIGGFVASVGSKVIDASLASQIRKLGLSLSK.

It belongs to the ATPase delta chain family. In terms of assembly, F-type ATPases have 2 components, F(1) - the catalytic core - and F(0) - the membrane proton channel. F(1) has five subunits: alpha(3), beta(3), gamma(1), delta(1), epsilon(1). CF(0) has four main subunits: a(1), b(1), b'(1) and c(10-14). The alpha and beta chains form an alternating ring which encloses part of the gamma chain. F(1) is attached to F(0) by a central stalk formed by the gamma and epsilon chains, while a peripheral stalk is formed by the delta, b and b' chains.

Its subcellular location is the cellular thylakoid membrane. F(1)F(0) ATP synthase produces ATP from ADP in the presence of a proton or sodium gradient. F-type ATPases consist of two structural domains, F(1) containing the extramembraneous catalytic core and F(0) containing the membrane proton channel, linked together by a central stalk and a peripheral stalk. During catalysis, ATP synthesis in the catalytic domain of F(1) is coupled via a rotary mechanism of the central stalk subunits to proton translocation. Its function is as follows. This protein is part of the stalk that links CF(0) to CF(1). It either transmits conformational changes from CF(0) to CF(1) or is implicated in proton conduction. The chain is ATP synthase subunit delta from Prochlorococcus marinus subsp. pastoris (strain CCMP1986 / NIES-2087 / MED4).